The primary structure comprises 62 residues: Translational regulator CsrA (62 aa).

The protein belongs to the CsrA/RsmA family. As to quaternary structure, homodimer; the beta-strands of each monomer intercalate to form a hydrophobic core, while the alpha-helices form wings that extend away from the core.

Its subcellular location is the cytoplasm. Its function is as follows. A key translational regulator that binds mRNA to regulate translation initiation and/or mRNA stability. Mediates global changes in gene expression, shifting from rapid growth to stress survival by linking envelope stress, the stringent response and the catabolite repression systems. Usually binds in the 5'-UTR; binding at or near the Shine-Dalgarno sequence prevents ribosome-binding, repressing translation, binding elsewhere in the 5'-UTR can activate translation and/or stabilize the mRNA. Its function is antagonized by small RNA(s). This Idiomarina loihiensis (strain ATCC BAA-735 / DSM 15497 / L2-TR) protein is Translational regulator CsrA.